We begin with the raw amino-acid sequence, 360 residues long: Histidinol-phosphate aminotransferase (360 aa).

K222 is subject to N6-(pyridoxal phosphate)lysine.

Belongs to the class-II pyridoxal-phosphate-dependent aminotransferase family. Histidinol-phosphate aminotransferase subfamily. Pyridoxal 5'-phosphate is required as a cofactor.

The enzyme catalyses L-histidinol phosphate + 2-oxoglutarate = 3-(imidazol-4-yl)-2-oxopropyl phosphate + L-glutamate. The protein operates within amino-acid biosynthesis; L-histidine biosynthesis; L-histidine from 5-phospho-alpha-D-ribose 1-diphosphate: step 7/9. The protein is Histidinol-phosphate aminotransferase of Haloarcula marismortui (strain ATCC 43049 / DSM 3752 / JCM 8966 / VKM B-1809) (Halobacterium marismortui).